Here is a 461-residue protein sequence, read N- to C-terminus: MEKKCTLYFLVLLPFFMILVTAELEESPEDSIQLGVTRNKIMTAQYECYQKIMQDPIQQAEGVYCNRTWDGWLCWNDVAAGTESMQLCPDYFQDFDPSEKVTKICDQDGNWFRHPASNRTWTNYTQCNVNTHEKVKTALNLFYLTIIGHGLSIASLLISLGIFFYFKSLSCQRITLHKNLFFSFVCNSVVTIIHLTAVANNQALVATNPVSCKVSQFIHLYLMGCNYFWMLCEGIYLHTLIVVAVFAEKQHLMWYYFLGWGFPLIPACIHAIARSLYYNDNCWISSDTHLLYIIHGPICAALLVNLFFLLNIVRVLITKLKVTHQAESNLYMKAVRATLILVPLLGIEFVLIPWRPEGKIAEEVYDYIMHILMHFQGLLVSTIFCFFNGEVQAILRRNWNQYKIQFGNSFSNSEALRSASYTVSTISDGPGYSHDCPSEHLNGKSIHDIENVLLKPENLYN.

The signal sequence occupies residues 1-22 (MEKKCTLYFLVLLPFFMILVTA). The Extracellular segment spans residues 23-139 (ELEESPEDSI…NTHEKVKTAL (117 aa)). Cystine bridges form between Cys48/Cys74, Cys65/Cys105, and Cys88/Cys127. N-linked (GlcNAc...) asparagine glycosylation is found at Asn66, Asn118, and Asn123. A helical membrane pass occupies residues 140–164 (NLFYLTIIGHGLSIASLLISLGIFF). The Cytoplasmic segment spans residues 165–175 (YFKSLSCQRIT). Residues 176–198 (LHKNLFFSFVCNSVVTIIHLTAV) traverse the membrane as a helical segment. The Extracellular segment spans residues 199 to 209 (ANNQALVATNP). The chain crosses the membrane as a helical span at residues 210-238 (VSCKVSQFIHLYLMGCNYFWMLCEGIYLH). Over 239-252 (TLIVVAVFAEKQHL) the chain is Cytoplasmic. The chain crosses the membrane as a helical span at residues 253–273 (MWYYFLGWGFPLIPACIHAIA). Residues 274–289 (RSLYYNDNCWISSDTH) are Extracellular-facing. Positions 288–289 (TH) are required for RAMP3 interaction. The helical transmembrane segment at 290-314 (LLYIIHGPICAALLVNLFFLLNIVR) threads the bilayer. Residues 315–329 (VLITKLKVTHQAESN) are Cytoplasmic-facing. The chain crosses the membrane as a helical span at residues 330–351 (LYMKAVRATLILVPLLGIEFVL). Residues 352–366 (IPWRPEGKIAEEVYD) lie on the Extracellular side of the membrane. A helical transmembrane segment spans residues 367-387 (YIMHILMHFQGLLVSTIFCFF). Phosphoserine is present on residues Ser420 and Ser445.

This sequence belongs to the G-protein coupled receptor 2 family. Heterodimer of CALCRL and RAMP1; the receptor complex functions as CGRP receptor. Heterodimer of CALCRL and RAMP2 or CALCRL and RAMP3; the complexes function as adrenomedullin receptor. As to expression, predominantly expressed in the lung and heart.

It localises to the cell membrane. G protein-coupled receptor which specificity is determined by its interaction with receptor-activity-modifying proteins (RAMPs). Together with RAMP1, form the receptor complex for calcitonin-gene-related peptides CALCA/CGRP1 and CALCB/CGRP2. Together with RAMP2 or RAMP3, function as receptor complexes for adrenomedullin (ADM and ADM2). Ligand binding causes a conformation change that triggers signaling via guanine nucleotide-binding proteins (G proteins) and modulates the activity of downstream effectors. Activates cAMP-dependent pathway. The protein is Calcitonin gene-related peptide type 1 receptor of Homo sapiens (Human).